The chain runs to 413 residues: Arginine biosynthesis bifunctional protein ArgJ (413 aa).

Residues Thr163, Lys189, Thr200, Glu286, Asn408, and Thr413 each coordinate substrate. Residue Thr200 is the Nucleophile of the active site.

It belongs to the ArgJ family. In terms of assembly, heterotetramer of two alpha and two beta chains.

The protein localises to the cytoplasm. The catalysed reaction is N(2)-acetyl-L-ornithine + L-glutamate = N-acetyl-L-glutamate + L-ornithine. The enzyme catalyses L-glutamate + acetyl-CoA = N-acetyl-L-glutamate + CoA + H(+). It participates in amino-acid biosynthesis; L-arginine biosynthesis; L-ornithine and N-acetyl-L-glutamate from L-glutamate and N(2)-acetyl-L-ornithine (cyclic): step 1/1. Its pathway is amino-acid biosynthesis; L-arginine biosynthesis; N(2)-acetyl-L-ornithine from L-glutamate: step 1/4. Functionally, catalyzes two activities which are involved in the cyclic version of arginine biosynthesis: the synthesis of N-acetylglutamate from glutamate and acetyl-CoA as the acetyl donor, and of ornithine by transacetylation between N(2)-acetylornithine and glutamate. The sequence is that of Arginine biosynthesis bifunctional protein ArgJ from Staphylococcus aureus (strain Mu50 / ATCC 700699).